Reading from the N-terminus, the 520-residue chain is Serine protease Hip1 (520 aa).

An N-terminal signal peptide occupies residues 1-30 (MGMRLSRRDKIARMLLIWAALAAVALVLVG). Cys31 carries N-palmitoyl cysteine lipidation. A lipid anchor (S-diacylglycerol cysteine) is attached at Cys31. The 396-residue stretch at 102-497 (GSLVINPGGP…TQHTVVFQGD (396 aa)) folds into the AB hydrolase-1 domain. The Nucleophile role is filled by Ser228. Residue Asp463 is part of the active site. Catalysis depends on His490, which acts as the Proton donor.

This sequence belongs to the peptidase S33 family.

The protein resides in the cell envelope. It localises to the cell membrane. In terms of biological role, serine protease that promotes pathogenesis by promoting the processing and the extracellular release of the M.bovis heat-shock protein GroEL2. Key immunomodulatory virulence factor, which promotes survival in host macrophages and modulates host immune responses. The protein is Serine protease Hip1 of Mycobacterium bovis (strain ATCC BAA-935 / AF2122/97).